Reading from the N-terminus, the 128-residue chain is uncharacterized protein (128 aa).

The S1 motif domain maps to 6-74 (GSKLQGKITG…KDGKIGLSIK (69 aa)). Residues 72–128 (SIKKAKDRPQARPRNDFRPKESFEQKMNKFLKDSEDRLSSLKRNTESKRGGRGARRG) are disordered. Over residues 78 to 120 (DRPQARPRNDFRPKESFEQKMNKFLKDSEDRLSSLKRNTESKR) the composition is skewed to basic and acidic residues.

The protein belongs to the peptidase U57 family.

This is an uncharacterized protein from Bacillus subtilis (strain 168).